The chain runs to 873 residues: MKILKTLTLRGPNYWSIRRKKLIVMRLDLEDLAERPSNSIPGFYEGLIRVLPSLVEHFCSPGHRGGFLARVREGTYMGHIVEHVALELQELVGMTAGFGRTRETSTPGIYNVVYEYVDEQAGRYAGRAAVRLCRSLVDTGDYSLTELEKDLEDLRDLGANSALGPSTETIVTEADARKIPWMLLSARAMVQLGYGVHQQRIQATLSSHSGILGVELACDKEGTKTILQDAGIPVPRGTTIQYFDDLEEAINDVGGYPVVIKPLDGNHGRGITINVRHWEEAIAAYDLAAEESKSRSIIVERYYEGSDHRVLVVNGKLVAVAERIPAHVTGDGTSTITELIDKTNQDPNRGDGHANILTKIVVNKTAIDVMERQGYNLDSVLPKDEVVYLRATANLSTGGIAIDRTDDIHPENIWLMERVAKVIGLDIAGIDVVTSDISKPLRETNGVIVEVNAAPGFRMHVAPSQGLPRNVAAPVLDMLFPSGTPSRIPILAVTGTNGKTTTTRLLAHIYRQTGKTVGYTSTDAIYINEYCVEKGDNTGPQSAAVILRDPTVEVAVLETARGGILRAGLAFDTCDVGVVLNVAADHLGLGDIDTIEQMAKVKSVIAEVVDPSGYAVLNADDPLVAAMADKVKAKVAYFSMNPDNPVIQNHIRRNGIAAVYESGYVSILEGSWTLRVEEATLIPMTMGGMAPFMIANALAACLAAFVNGLDVEVIRQGVRTFTTSAEQTPGRMNLFNLGRYHALVDYAHNPAGYRAVGDFVKNWHGQRFGVVGGPGDRRDSDLIELGQIAAQVFDRIIVKEDDDKRGRSGGETADLIVKGILQENPGAAYEVILDETVALNKALDQVEEKGLVVVFPESVSKAIELIKARKPIG.

In terms of domain architecture, ATP-grasp spans 224 to 480 (KTILQDAGIP…VAAPVLDMLF (257 aa)). Residue 495-501 (GTNGKTT) participates in ATP binding.

It in the C-terminal section; belongs to the MurCDEF family. As to quaternary structure, homodimer.

It catalyses the reaction [L-4-(L-arginin-2-N-yl)aspartate](n) + L-aspartate + ATP = [L-4-(L-arginin-2-N-yl)aspartate](n)-L-aspartate + ADP + phosphate + H(+). The enzyme catalyses [L-4-(L-arginin-2-N-yl)aspartate](n)-L-aspartate + L-arginine + ATP = [L-4-(L-arginin-2-N-yl)aspartate](n+1) + ADP + phosphate + H(+). Functionally, catalyzes the ATP-dependent polymerization of arginine and aspartate to multi-L-arginyl-poly-L-aspartic acid (cyanophycin; a water-insoluble reserve polymer). The protein is Cyanophycin synthetase (cphA) of Synechocystis sp. (strain ATCC 27184 / PCC 6803 / Kazusa).